The primary structure comprises 289 residues: Acetyl-coenzyme A carboxylase carboxyl transferase subunit beta (289 aa).

The 262-residue stretch at 28–289 (VMTKCPECKK…QGGGMAVWQS (262 aa)) folds into the CoA carboxyltransferase N-terminal domain. 4 residues coordinate Zn(2+): Cys32, Cys35, Cys51, and Cys54. A C4-type zinc finger spans residues 32 to 54 (CPECKKIMYTKELLKNLKVCVNC).

It belongs to the AccD/PCCB family. In terms of assembly, acetyl-CoA carboxylase is a heterohexamer composed of biotin carboxyl carrier protein (AccB), biotin carboxylase (AccC) and two subunits each of ACCase subunit alpha (AccA) and ACCase subunit beta (AccD). Zn(2+) is required as a cofactor.

The protein localises to the cytoplasm. The catalysed reaction is N(6)-carboxybiotinyl-L-lysyl-[protein] + acetyl-CoA = N(6)-biotinyl-L-lysyl-[protein] + malonyl-CoA. Its pathway is lipid metabolism; malonyl-CoA biosynthesis; malonyl-CoA from acetyl-CoA: step 1/1. Its function is as follows. Component of the acetyl coenzyme A carboxylase (ACC) complex. Biotin carboxylase (BC) catalyzes the carboxylation of biotin on its carrier protein (BCCP) and then the CO(2) group is transferred by the transcarboxylase to acetyl-CoA to form malonyl-CoA. This chain is Acetyl-coenzyme A carboxylase carboxyl transferase subunit beta, found in Bacillus cereus (strain G9842).